Consider the following 156-residue polypeptide: MAVLEIVKHPNEVLETPCERVINFDKKLVKLLKDMHETMLIADGVGLAAPQVGVSLQVAVVDIGDDTGKIELINPSILEKRGEQVGPEGCLSFPGLYGEVERADYIKVRAQNRRGKVFLLEAEGLLARAIQHEIDHLHGVLFTSKVTRYYEENELE.

The Fe cation site is built by C90 and H132. E133 is an active-site residue. Residue H136 coordinates Fe cation.

It belongs to the polypeptide deformylase family. Fe(2+) serves as cofactor.

The catalysed reaction is N-terminal N-formyl-L-methionyl-[peptide] + H2O = N-terminal L-methionyl-[peptide] + formate. Functionally, removes the formyl group from the N-terminal Met of newly synthesized proteins. Requires at least a dipeptide for an efficient rate of reaction. N-terminal L-methionine is a prerequisite for activity but the enzyme has broad specificity at other positions. This chain is Peptide deformylase 1, found in Bacillus anthracis.